The following is a 1066-amino-acid chain: TBC1 domain family member 31 (1066 aa).

WD repeat units lie at residues 33–74 (HNTS…LHGN), 75–116 (RFNL…TVTK), 117–157 (ELVS…LDTF), 158–200 (QRKR…CDTL), 201–248 (FCKY…ARQL), 249–296 (FRII…MQTC), and 297–334 (KLLF…NIYS). Residues 424–599 (EYPTKYRMFI…KLFDNIFSNH (176 aa)) form the Rab-GAP TBC domain. Coiled-coil stretches lie at residues 728–861 (QKQE…DLEE) and 914–948 (NKCY…KWKE). The span at 989–998 (CHKEEPRFQN) shows a compositional bias: basic and acidic residues. The tract at residues 989 to 1020 (CHKEEPRFQNEQDSSCLPRTSQLNDSSEMDPS) is disordered. The span at 999-1020 (EQDSSCLPRTSQLNDSSEMDPS) shows a compositional bias: polar residues. Residues 1053 to 1056 (RARH) are mediates direct interaction with PJA2.

As to quaternary structure, interacts with PJA2; the interaction is direct and recruits PJA2 to centrosomes. Interacts with OFD1; regulates its activity in cilium assembly. Interacts with PRKACA.

The protein resides in the cytoplasm. It localises to the cytoskeleton. Its subcellular location is the microtubule organizing center. The protein localises to the centrosome. It is found in the centriolar satellite. The protein resides in the cilium basal body. In terms of biological role, molecular adapter which is involved in cilium biogenesis. Part of a functional complex including OFD1 a centriolar protein involved in cilium assembly. Could regulate the cAMP-dependent phosphorylation of OFD1, and its subsequent ubiquitination by PJA2 which ultimately leads to its proteasomal degradation. The polypeptide is TBC1 domain family member 31 (Homo sapiens (Human)).